The following is a 143-amino-acid chain: MKGEREFRRVRQQGVALRDPLFTLRVTDYRPRHGEVWRPQAIIGIVVSKKTLRRAVDRNRARRRVREALRTLPGGLPPCRAILLPNPGVLTVPFPELQAALVRVLAQVPGRVKRKGGGPGGNRRSAPPGSAPLTDDGRLRGEP.

Residues 111 to 143 (RVKRKGGGPGGNRRSAPPGSAPLTDDGRLRGEP) form a disordered region.

It belongs to the RnpA family. Consists of a catalytic RNA component (M1 or rnpB) and a protein subunit.

It catalyses the reaction Endonucleolytic cleavage of RNA, removing 5'-extranucleotides from tRNA precursor.. RNaseP catalyzes the removal of the 5'-leader sequence from pre-tRNA to produce the mature 5'-terminus. It can also cleave other RNA substrates such as 4.5S RNA. The protein component plays an auxiliary but essential role in vivo by binding to the 5'-leader sequence and broadening the substrate specificity of the ribozyme. This chain is Ribonuclease P protein component, found in Deinococcus geothermalis (strain DSM 11300 / CIP 105573 / AG-3a).